Reading from the N-terminus, the 125-residue chain is Basic leucine zipper transcriptional factor ATF-like (125 aa).

Residues 1–14 (MPHSSDSSDSSFSR) are compositionally biased toward low complexity. Residues 1-58 (MPHSSDSSDSSFSRSPPPGKQDSSDDVRRVQRREKNRIAAQKSRQRQTQKADTLHLES) are disordered. In terms of domain architecture, bZIP spans 26 to 89 (DVRRVQRREK…KYFTSVLNSH (64 aa)). The interval 28–50 (RRVQRREKNRIAAQKSRQRQTQK) is basic motif. At Ser43 the chain carries Phosphoserine. Thr48 carries the post-translational modification Phosphothreonine. The interval 54–75 (LHLESEDLEKQNAALRKEIKQL) is leucine-zipper.

This sequence belongs to the bZIP family. In terms of assembly, heterodimer; mainly heterodimerizes with JUNB. The BATF-JUNB heterodimer interacts with IRF4 and IRF8. Interacts (via bZIP domain) with IRF4 and IRF8; the interaction is direct. Also forms heterodimers with JUN and JUND. Also interacts with IFI35. Post-translationally, phosphorylated on serine and threonine residues and at least one tyrosine residue. Phosphorylation at Ser-43 inhibit DNA binding activity and transforms it as a negative regulator of AP-1 mediated transcription. Phosphorylated. As to expression, expressed at highest levels in lung, and at lower levels in placenta, liver, kidney, spleen, and peripheral blood. Detected in SW480 colorectal cancer cell line and several hematopoietic tumor cell lines, including Raji Burkitt's lymphoma. Strongly expressed in mature B- and T-lymphocytes. Also expressed in moderate levels in lymph node and appendix and at low levels in thymus and bone marrow.

The protein resides in the nucleus. It localises to the cytoplasm. Its function is as follows. AP-1 family transcription factor that controls the differentiation of lineage-specific cells in the immune system: specifically mediates the differentiation of T-helper 17 cells (Th17), follicular T-helper cells (TfH), CD8(+) dendritic cells and class-switch recombination (CSR) in B-cells. Acts via the formation of a heterodimer with JUNB that recognizes and binds DNA sequence 5'-TGA[CG]TCA-3'. The BATF-JUNB heterodimer also forms a complex with IRF4 (or IRF8) in immune cells, leading to recognition of AICE sequence (5'-TGAnTCA/GAAA-3'), an immune-specific regulatory element, followed by cooperative binding of BATF and IRF4 (or IRF8) and activation of genes. Controls differentiation of T-helper cells producing interleukin-17 (Th17 cells) by binding to Th17-associated gene promoters: regulates expression of the transcription factor RORC itself and RORC target genes such as IL17 (IL17A or IL17B). Also involved in differentiation of follicular T-helper cells (TfH) by directing expression of BCL6 and MAF. In B-cells, involved in class-switch recombination (CSR) by controlling the expression of both AICDA and of germline transcripts of the intervening heavy-chain region and constant heavy-chain region (I(H)-C(H)). Following infection, can participate in CD8(+) dendritic cell differentiation via interaction with IRF4 and IRF8 to mediate cooperative gene activation. Regulates effector CD8(+) T-cell differentiation by regulating expression of SIRT1. Following DNA damage, part of a differentiation checkpoint that limits self-renewal of hematopoietic stem cells (HSCs): up-regulated by STAT3, leading to differentiation of HSCs, thereby restricting self-renewal of HSCs. In Homo sapiens (Human), this protein is Basic leucine zipper transcriptional factor ATF-like (BATF).